The following is a 407-amino-acid chain: Imidazolonepropionase (407 aa).

Positions 68 and 70 each coordinate Fe(3+). 2 residues coordinate Zn(2+): His-68 and His-70. Arg-77, Tyr-140, and His-173 together coordinate 4-imidazolone-5-propanoate. Tyr-140 contacts N-formimidoyl-L-glutamate. Residue His-238 participates in Fe(3+) binding. His-238 contributes to the Zn(2+) binding site. Position 241 (Gln-241) interacts with 4-imidazolone-5-propanoate. A Fe(3+)-binding site is contributed by Asp-313. Asp-313 is a binding site for Zn(2+). Residues Asn-315 and Gly-317 each coordinate N-formimidoyl-L-glutamate. A 4-imidazolone-5-propanoate-binding site is contributed by Thr-318.

The protein belongs to the metallo-dependent hydrolases superfamily. HutI family. The cofactor is Zn(2+). Requires Fe(3+) as cofactor.

It localises to the cytoplasm. The enzyme catalyses 4-imidazolone-5-propanoate + H2O = N-formimidoyl-L-glutamate. Its pathway is amino-acid degradation; L-histidine degradation into L-glutamate; N-formimidoyl-L-glutamate from L-histidine: step 3/3. In terms of biological role, catalyzes the hydrolytic cleavage of the carbon-nitrogen bond in imidazolone-5-propanoate to yield N-formimidoyl-L-glutamate. It is the third step in the universal histidine degradation pathway. This Burkholderia pseudomallei (strain 668) protein is Imidazolonepropionase.